The sequence spans 348 residues: NADH-ubiquinone oxidoreductase chain 2 (348 aa).

The next 11 helical transmembrane spans lie at 1-21, 23-43, 56-76, 92-112, 123-143, 148-168, 176-196, 198-218, 242-262, 272-292, and 321-341; these read MMTL…MFSS, WFFA…MMLF, YFIS…WNYF, ITLI…HFWL, MGLI…IQVS, NMYI…FGGL, LLAY…AVSA, LSWV…TILI, CILV…FLKL, SLIL…FFYL, and LLFN…PFMI.

This sequence belongs to the complex I subunit 2 family.

The protein resides in the mitochondrion inner membrane. The enzyme catalyses a ubiquinone + NADH + 5 H(+)(in) = a ubiquinol + NAD(+) + 4 H(+)(out). Core subunit of the mitochondrial membrane respiratory chain NADH dehydrogenase (Complex I) that is believed to belong to the minimal assembly required for catalysis. Complex I functions in the transfer of electrons from NADH to the respiratory chain. The immediate electron acceptor for the enzyme is believed to be ubiquinone. In Myxine glutinosa (Atlantic hagfish), this protein is NADH-ubiquinone oxidoreductase chain 2 (MT-ND2).